Reading from the N-terminus, the 358-residue chain is Methionine aminopeptidase 2 (358 aa).

Substrate is bound at residue His109. A divalent metal cation-binding residues include Asp130, Asp141, and His210. Residue His218 participates in substrate binding. Positions 243 and 339 each coordinate a divalent metal cation.

The protein belongs to the peptidase M24A family. Methionine aminopeptidase eukaryotic type 2 subfamily. Requires Co(2+) as cofactor. The cofactor is Zn(2+). Mn(2+) is required as a cofactor. It depends on Fe(2+) as a cofactor.

The protein localises to the cytoplasm. It catalyses the reaction Release of N-terminal amino acids, preferentially methionine, from peptides and arylamides.. With respect to regulation, irreversibly inhibited by the fungal metabolite fumagillin and the fumagillin analog TNP470, antiangiogenic drugs. Functionally, cotranslationally removes the N-terminal methionine from nascent proteins. The N-terminal methionine is often cleaved when the second residue in the primary sequence is small and uncharged (Met-Ala-, Cys, Gly, Pro, Ser, Thr, or Val). The sequence is that of Methionine aminopeptidase 2 from Encephalitozoon hellem (strain ATCC 50504) (Microsporidian parasite).